A 690-amino-acid polypeptide reads, in one-letter code: ATP-dependent DNA helicase Hel308 (690 aa).

Residues Gln26 and 45-52 contribute to the ATP site; that span reads IPTASGKT. The Helicase ATP-binding domain maps to 32–188; the sequence is AGYLESEDNY…WLDARVVEHD (157 aa). Residues 133–136 carry the DEAH box motif; the sequence is DEFH. Residues 208 to 417 enclose the Helicase C-terminal domain; sequence EKNDVVLKVL…NRDALYRQII (210 aa).

This sequence belongs to the helicase family. Hel308 subfamily. Monomer. Binds replication protein A (RPA), in presence and absence of DNA.

It carries out the reaction Couples ATP hydrolysis with the unwinding of duplex DNA by translocating in the 3'-5' direction.. The catalysed reaction is ATP + H2O = ADP + phosphate + H(+). In terms of biological role, DNA-dependent ATPase and 3'-5' DNA helicase that may be involved in repair of stalled replication forks. Helicase with 3'-to 5'- polarity; able to unwind over 100 bp of DNA at 50 degrees Celsius. Unwinds forked DNA, preferentially on lagging strand forks; has weaker activity on Holliday junctions. Displaces the invading strand in DNA D-loops. Unwinds short oligonucleotides from dsDNA with 3'- but not blunt ends or 5'-ssDNA tails in an ATP-dependent manner. ATPase activity is stimulated by ssDNA but not dsDNA, protein binds ssDNA, dsDNA with 5'- or 3'-overhangs but not blunt ended dsDNA and replication forks. Replication forks bind both this protein and RPA. RPA does not stimulate the helicase activity of this protein. The polypeptide is ATP-dependent DNA helicase Hel308 (Methanothermobacter thermautotrophicus (strain ATCC 29096 / DSM 1053 / JCM 10044 / NBRC 100330 / Delta H) (Methanobacterium thermoautotrophicum)).